The sequence spans 181 residues: Cyclic AMP-dependent transcription factor ATF-3 (181 aa).

The segment at 73–97 (EMSVTKSEAAPEEDERKRRRRERNK) is disordered. K78 participates in a covalent cross-link: Glycyl lysine isopeptide (Lys-Gly) (interchain with G-Cter in SUMO2). Residues 86–149 (DERKRRRRER…QHLIYMLNLH (64 aa)) form the bZIP domain. Residues 88-110 (RKRRRRERNKIAAAKCRNKKKEK) form a basic motif region. Residues 114 to 142 (LQKESEKLESVNAELKAQIEELKNEKQHL) form a leucine-zipper region. The residue at position 162 (T162) is a Phosphothreonine. Residue K175 forms a Glycyl lysine isopeptide (Lys-Gly) (interchain with G-Cter in SUMO2) linkage.

This sequence belongs to the bZIP family. ATF subfamily. In terms of assembly, binds DNA as a homodimer or a heterodimer. Interacts with KAT5; promoting KAT5 autoacetylation and KAT5 deubiquitination by USP7.

It is found in the nucleus. This protein binds the cAMP response element (CRE) (consensus: 5'-GTGACGT[AC][AG]-3'), a sequence present in many viral and cellular promoters. Represses transcription from promoters with ATF sites. It may repress transcription by stabilizing the binding of inhibitory cofactors at the promoter. The polypeptide is Cyclic AMP-dependent transcription factor ATF-3 (Mus musculus (Mouse)).